A 498-amino-acid polypeptide reads, in one-letter code: NAD(P)H-quinone oxidoreductase subunit 2, chloroplastic (498 aa).

14 helical membrane-spanning segments follow: residues 18–38 (LTIL…VIDL), 51–71 (ISMV…GFFT), 87–107 (FFLL…ILCS), 111–131 (LAEF…LSCA), 134–154 (LVTI…LSGY), 168–188 (FLLM…LLYG), 211–231 (IIYL…SLFP), 244–264 (PTPV…ALFT), 278–298 (WHVA…LIAV), 306–326 (MLAF…LSAD), 337–357 (YTFI…LFGL), 379–399 (FSLV…GFFG), 411–431 (GLYS…YYYL), and 470–490 (IAMI…DPII).

The protein belongs to the complex I subunit 2 family. As to quaternary structure, NDH is composed of at least 16 different subunits, 5 of which are encoded in the nucleus.

It localises to the plastid. It is found in the chloroplast thylakoid membrane. The catalysed reaction is a plastoquinone + NADH + (n+1) H(+)(in) = a plastoquinol + NAD(+) + n H(+)(out). The enzyme catalyses a plastoquinone + NADPH + (n+1) H(+)(in) = a plastoquinol + NADP(+) + n H(+)(out). In terms of biological role, NDH shuttles electrons from NAD(P)H:plastoquinone, via FMN and iron-sulfur (Fe-S) centers, to quinones in the photosynthetic chain and possibly in a chloroplast respiratory chain. The immediate electron acceptor for the enzyme in this species is believed to be plastoquinone. Couples the redox reaction to proton translocation, and thus conserves the redox energy in a proton gradient. The sequence is that of NAD(P)H-quinone oxidoreductase subunit 2, chloroplastic from Adiantum capillus-veneris (Maidenhair fern).